A 581-amino-acid polypeptide reads, in one-letter code: Intermediate filament protein ifa-2 (581 aa).

2 disordered regions span residues 1 to 35 (MTDP…GSGN) and 47 to 68 (SSVS…RDNR). The tract at residues 1-74 (MTDPDSYRSS…RDNREREKKE (74 aa)) is head. The segment covering 7 to 28 (YRSSITSRPSFNRTVTSSSQNY) has biased composition (polar residues). In terms of domain architecture, IF rod spans 71 to 424 (EKKEIMELND…QMLEGNSEGN (354 aa)). The coil 1A stretch occupies residues 75–106 (IMELNDRLASYIEKVRFLDAQNRKLDADLKML). Positions 107 to 120 (QGRFGKSTGSVKVM) are linker 1. The coil 1B stretch occupies residues 121 to 258 (YEMEITTATN…RGFETELKEL (138 aa)). Residues 259 to 276 (QAQAARDTTSENREYFKN) form a linker 12 region. The tract at residues 277 to 424 (ELANAMRDIR…QMLEGNSEGN (148 aa)) is coil 2. Residues 425-578 (GLRQLVEKVV…THIQRQSQQT (154 aa)) are tail. Residues 449 to 469 (RVVKGEHSSRTSYQRSAKGNV) form a disordered region. Positions 457 to 574 (SRTSYQRSAK…EERATHIQRQ (118 aa)) constitute an LTD domain.

This sequence belongs to the intermediate filament family. In terms of assembly, forms some heteromeric filaments with ifb-1. As to expression, mainly expressed in regions of the hypodermis adjacent to muscle. Expressed in longitudinal stripes where the mechanosensory neurons interface with the hypodermis. Also expressed to the uterine seam and within the uterine-vulval cells.

It is found in the cell junction. The protein localises to the hemidesmosome. Functionally, cytoplasmic intermediate filaments provide mechanical strength to cells. Essential protein, involved in attachment structures in epidermal cells that connect muscles to the external cuticle. Probably acts by forming hypodermal hemidesmosome complexes that help mediate muscle-cuticle force transduction. Although expressed during embryogenesis, it is not required for embryonic development of muscle-cuticle linkages nor for the localization of other proteins to the hemidesmosomes in embryos. In Caenorhabditis elegans, this protein is Intermediate filament protein ifa-2.